Consider the following 243-residue polypeptide: UPF0280 protein Memar_1519 (243 aa).

This sequence belongs to the UPF0280 family.

This chain is UPF0280 protein Memar_1519, found in Methanoculleus marisnigri (strain ATCC 35101 / DSM 1498 / JR1).